Here is a 423-residue protein sequence, read N- to C-terminus: Major royal jelly protein 9 (423 aa).

An N-terminal signal peptide occupies residues 1-20 (MSFNIWWLILYFSIVCQAKA). 5 N-linked (GlcNAc...) asparagine glycosylation sites follow: Asn110, Asn118, Asn177, Asn196, and Asn345.

The protein belongs to the major royal jelly protein family. As to expression, expressed at very low levels in the hypopharyngeal glands of adult worker bees (at protein level); expression peaks at 12 days post eclosion. Secreted into bee venom in the sting apparatus (at protein level). Expressed in the brains of adult worker bees peaking at 12 days post eclosion (at protein level). Expressed in the spermatheca of adult queen bees (at protein level); expression levels are higher in mated queens than in virgin queens. Along with Mrjp8 expressed at very low levels in the head of worker bees compared to other major royal jelly proteins.

The protein resides in the secreted. Functionally, component of bee sting venom. Component of royal jelly, a substance produced in the hypopharyngeal gland containing proteins, free amino acids, fatty acids, sugars and other nutrients, which is fed to developing larvae by worker nurse bees; may be present only at trace levels. All larvae are fed some royal jelly (also known as worker jelly) early in their development but it forms the principal source of nutrition for larvae destined to become queen bees. Produced in the spermatheca of adult queen bees, along with other major royal jelly proteins, where it may act as a nutrient supply for sperm stored by mated queens, or be involved in energy metabolism. In Apis mellifera (Honeybee), this protein is Major royal jelly protein 9.